Here is a 54-residue protein sequence, read N- to C-terminus: U7-ctenitoxin-Pk1a (54 aa).

Cystine bridges form between C3/C17, C10/C23, C14/C52, C16/C37, and C25/C35.

In terms of tissue distribution, expressed by the venom gland.

The protein localises to the secreted. Functionally, blocks voltage-gated sodium channels (Nav). Causes immediate spastic paralysis and death in mice within 1 minute of injection at dose levels of 1.5 ug per mouse. This Phoneutria keyserlingi (Brazilian wandering spider) protein is U7-ctenitoxin-Pk1a.